The sequence spans 455 residues: Mycosin-4 (455 aa).

The first 25 residues, Met1–Val25, serve as a signal peptide directing secretion. The Peptidase S8 domain maps to Ser74–Val384. Active-site charge relay system residues include Asp98, His129, and Ser329. Residues Ile389–Arg417 are disordered. Positions Thr394–Pro412 are enriched in low complexity. A helical membrane pass occupies residues Leu432–Ile452.

Belongs to the peptidase S8 family.

It is found in the cell membrane. The chain is Mycosin-4 from Mycobacterium tuberculosis (strain ATCC 25618 / H37Rv).